A 288-amino-acid chain; its full sequence is Pantothenate synthetase (288 aa).

35-42 (MGALHDGH) serves as a coordination point for ATP. The active-site Proton donor is the His-42. Gln-66 serves as a coordination point for (R)-pantoate. Beta-alanine is bound at residue Gln-66. 152–155 (GEKD) provides a ligand contact to ATP. Gln-158 is a (R)-pantoate binding site. ATP-binding positions include Gly-181 and 189–192 (LSSR).

This sequence belongs to the pantothenate synthetase family. In terms of assembly, homodimer.

Its subcellular location is the cytoplasm. It catalyses the reaction (R)-pantoate + beta-alanine + ATP = (R)-pantothenate + AMP + diphosphate + H(+). It participates in cofactor biosynthesis; (R)-pantothenate biosynthesis; (R)-pantothenate from (R)-pantoate and beta-alanine: step 1/1. Functionally, catalyzes the condensation of pantoate with beta-alanine in an ATP-dependent reaction via a pantoyl-adenylate intermediate. This chain is Pantothenate synthetase, found in Maricaulis maris (strain MCS10) (Caulobacter maris).